A 393-amino-acid chain; its full sequence is NAD(P)H-quinone oxidoreductase subunit H, chloroplastic (393 aa).

Belongs to the complex I 49 kDa subunit family. NDH is composed of at least 16 different subunits, 5 of which are encoded in the nucleus.

The protein localises to the plastid. It is found in the chloroplast thylakoid membrane. It catalyses the reaction a plastoquinone + NADH + (n+1) H(+)(in) = a plastoquinol + NAD(+) + n H(+)(out). It carries out the reaction a plastoquinone + NADPH + (n+1) H(+)(in) = a plastoquinol + NADP(+) + n H(+)(out). Its function is as follows. NDH shuttles electrons from NAD(P)H:plastoquinone, via FMN and iron-sulfur (Fe-S) centers, to quinones in the photosynthetic chain and possibly in a chloroplast respiratory chain. The immediate electron acceptor for the enzyme in this species is believed to be plastoquinone. Couples the redox reaction to proton translocation, and thus conserves the redox energy in a proton gradient. The chain is NAD(P)H-quinone oxidoreductase subunit H, chloroplastic from Liriodendron tulipifera (Tuliptree).